Here is a 258-residue protein sequence, read N- to C-terminus: Ribosomal RNA small subunit methyltransferase A (258 aa).

Residues His13, Leu15, Gly40, Glu61, Asp85, and Asn106 each coordinate S-adenosyl-L-methionine.

This sequence belongs to the class I-like SAM-binding methyltransferase superfamily. rRNA adenine N(6)-methyltransferase family. RsmA subfamily.

The protein localises to the cytoplasm. It catalyses the reaction adenosine(1518)/adenosine(1519) in 16S rRNA + 4 S-adenosyl-L-methionine = N(6)-dimethyladenosine(1518)/N(6)-dimethyladenosine(1519) in 16S rRNA + 4 S-adenosyl-L-homocysteine + 4 H(+). Functionally, specifically dimethylates two adjacent adenosines (A1518 and A1519) in the loop of a conserved hairpin near the 3'-end of 16S rRNA in the 30S particle. May play a critical role in biogenesis of 30S subunits. This chain is Ribosomal RNA small subunit methyltransferase A, found in Porphyromonas gingivalis (strain ATCC 33277 / DSM 20709 / CIP 103683 / JCM 12257 / NCTC 11834 / 2561).